A 1288-amino-acid chain; its full sequence is Structural maintenance of chromosomes protein 4 (1288 aa).

The segment covering 1–10 has biased composition (polar residues); sequence MPRKGTQPST. Residues 1-55 are disordered; sequence MPRKGTQPSTARRREEGPPPPSPDGASSDAEPEPPSGRTESPATAAETASEELDN. Residues serine 22 and serine 28 each carry the phosphoserine modification. A Phosphothreonine modification is found at threonine 39. Over residues 39–48 the composition is skewed to low complexity; that stretch reads TESPATAAET. Phosphoserine occurs at positions 41 and 50. ATP is bound at residue 113–120; the sequence is GPNGSGKS. Position 143 is a phosphoserine (serine 143). Positions 272–588 form a coiled coil; that stretch reads RRVEILNEHR…LFQKVEEAKS (317 aa). N6-acetyllysine is present on residues lysine 381 and lysine 679. Residues 613-727 enclose the SMC hinge domain; that stretch reads PGIYGRLGDL…ADNLDQATRV (115 aa). Residues 767-1020 adopt a coiled-coil conformation; that stretch reads LVIEISEEEV…ALSIKLKLEQ (254 aa). Serine 982 and serine 1056 each carry phosphoserine. Residues 1109-1129 adopt a coiled-coil conformation; it reads ELDKITYERDSFRQAYEDLRK.

The protein belongs to the SMC family. SMC4 subfamily. Forms a heterodimer with SMC2. Component of the condensin complex, which contains the SMC2 and SMC4 heterodimer, and three non SMC subunits that probably regulate the complex: BRRN1/CAPH, CNAP1/CAPD2 and CAPG. As to expression, widely expressed. Higher expression in testis, colon, thymus.

Its subcellular location is the nucleus. It localises to the cytoplasm. The protein resides in the chromosome. In terms of biological role, central component of the condensin complex, a complex required for conversion of interphase chromatin into mitotic-like condense chromosomes. The condensin complex probably introduces positive supercoils into relaxed DNA in the presence of type I topoisomerases and converts nicked DNA into positive knotted forms in the presence of type II topoisomerases. The sequence is that of Structural maintenance of chromosomes protein 4 (SMC4) from Homo sapiens (Human).